A 642-amino-acid chain; its full sequence is DNA gyrase subunit B (642 aa).

The region spanning 422–536 (CELFIVEGDS…AGYVYIAQPP (115 aa)) is the Toprim domain. Mg(2+) contacts are provided by glutamate 428, aspartate 501, and aspartate 503.

It belongs to the type II topoisomerase family. In terms of assembly, heterotetramer, composed of two GyrA and two GyrB chains. Within the heterotetramer, GyrA contains the active site tyrosine that forms a covalent intermediate with the DNA, while GyrB contributes the cofactor binding sites and catalyzes ATP hydrolysis. Mg(2+) is required as a cofactor. Requires Mn(2+) as cofactor. The cofactor is Ca(2+).

It localises to the cytoplasm. The enzyme catalyses ATP-dependent breakage, passage and rejoining of double-stranded DNA.. With respect to regulation, pyrrolopyrimidines inhibit both GyrB and its paralog in topoisomerase IV (parE). Its function is as follows. DNA gyrase negatively supercoils closed circular double-stranded DNA in an ATP-dependent manner and also catalyzes the interconversion of other topological isomers of double-stranded DNA rings, including catenanes and knotted rings. This chain is DNA gyrase subunit B, found in Enterococcus faecalis (strain ATCC 700802 / V583).